The primary structure comprises 656 residues: Chaperone protein HtpG (656 aa).

Positions methionine 1–arginine 359 are a; substrate-binding. The b stretch occupies residues glutamate 360–arginine 575. The c stretch occupies residues isoleucine 576 to methionine 656.

It belongs to the heat shock protein 90 family. Homodimer.

Its subcellular location is the cytoplasm. Functionally, molecular chaperone. Has ATPase activity. This Mycobacterium leprae (strain TN) protein is Chaperone protein HtpG.